The sequence spans 319 residues: MQRLDPWHGRCELRFEHRQTEHGDAGTVHQGGCSAPFKLLRAEQGKNGRCELPILHTAGGLVGGDQLSIALDLNTNSRCLITSVAAQKVYGSIGRSRLHPEGQWARQQVHCKLANSSDLEWLPQELVLYANALFEQHLTVQLPANASFLSAEIVRLGRTAAGETLQQGRWRSALSLCRRSVEPHQASRWELVDRLDLGGDALNDQHGLNKRPVFGSLVWAAPMPLNGEALTQLLELVRSDREGLNGTMRCSALDQGLVARYSGPSSRDARFWFSRIWARTRALRALSAPQIPRVWPLQEQPLPPSSFKTNTAVPAVRTH.

The segment at 298-319 (QEQPLPPSSFKTNTAVPAVRTH) is disordered.

The protein belongs to the UreD family. In terms of assembly, ureD, UreF and UreG form a complex that acts as a GTP-hydrolysis-dependent molecular chaperone, activating the urease apoprotein by helping to assemble the nickel containing metallocenter of UreC. The UreE protein probably delivers the nickel.

It localises to the cytoplasm. Required for maturation of urease via the functional incorporation of the urease nickel metallocenter. The sequence is that of Urease accessory protein UreD from Synechococcus sp. (strain WH7805).